Reading from the N-terminus, the 535-residue chain is CTP synthase (535 aa).

The tract at residues 1–267 (MTKYIFVTGG…DQIVCDHLKL (267 aa)) is amidoligase domain. Residue S13 participates in CTP binding. A UTP-binding site is contributed by S13. An ATP-binding site is contributed by 14-19 (SLGKGI). Y54 lines the L-glutamine pocket. D71 provides a ligand contact to ATP. The Mg(2+) site is built by D71 and E141. Residues 148–150 (DIE), 188–193 (KTKPTQ), and K224 contribute to the CTP site. Residues 188–193 (KTKPTQ) and K224 contribute to the UTP site. The Glutamine amidotransferase type-1 domain maps to 292-534 (RIALVGKYVE…VQASITNKES (243 aa)). G354 provides a ligand contact to L-glutamine. C381 serves as the catalytic Nucleophile; for glutamine hydrolysis. L-glutamine-binding positions include 382-385 (LGMQ), E405, and R462. Active-site residues include H507 and E509.

This sequence belongs to the CTP synthase family. In terms of assembly, homotetramer.

It catalyses the reaction UTP + L-glutamine + ATP + H2O = CTP + L-glutamate + ADP + phosphate + 2 H(+). It carries out the reaction L-glutamine + H2O = L-glutamate + NH4(+). The catalysed reaction is UTP + NH4(+) + ATP = CTP + ADP + phosphate + 2 H(+). It participates in pyrimidine metabolism; CTP biosynthesis via de novo pathway; CTP from UDP: step 2/2. Its activity is regulated as follows. Allosterically activated by GTP, when glutamine is the substrate; GTP has no effect on the reaction when ammonia is the substrate. The allosteric effector GTP functions by stabilizing the protein conformation that binds the tetrahedral intermediate(s) formed during glutamine hydrolysis. Inhibited by the product CTP, via allosteric rather than competitive inhibition. In terms of biological role, catalyzes the ATP-dependent amination of UTP to CTP with either L-glutamine or ammonia as the source of nitrogen. Regulates intracellular CTP levels through interactions with the four ribonucleotide triphosphates. The protein is CTP synthase of Bacillus cytotoxicus (strain DSM 22905 / CIP 110041 / 391-98 / NVH 391-98).